The sequence spans 287 residues: mRNA-capping enzyme regulatory subunit OPG124 (287 aa).

Belongs to the orthopoxvirus mRNA-capping enzyme regulatory subunit family. Interacts with the catalytic subunit OPG113.

The protein resides in the virion. Its function is as follows. Regulatory subunit of the mRNA cap enzyme which stabilizes the catalytic subunit and enhances its methyltransferase activity through an allosteric mechanism. Heterodimeric mRNA capping enzyme catalyzes the linkage of a N7-methyl-guanosine moiety to the first transcribed nucleotide (cap 0 structure), whereas the methyltransferase OPG102 is responsible for a second methylation at the 2'-O position of the ribose (cap 1 structure). Also involved in early viral gene transcription termination and intermediate viral gene transcription initiation. Early gene transcription termination requires the termination factor VTF, the DNA-dependent ATPase NPH-I/OPG123 and the RAP94/OPG109 subunit of the viral RNA polymerase, as well as the presence of a specific termination motif. Binds, together with RAP94/OPG109, to the termination motif 5'-UUUUUNU-3' in the nascent early mRNA. In Variola virus (isolate Human/India/Ind3/1967) (VARV), this protein is mRNA-capping enzyme regulatory subunit OPG124 (OPG124).